A 396-amino-acid chain; its full sequence is Elongation factor Tu 1 (396 aa).

The 197-residue stretch at Lys10–Glu206 folds into the tr-type G domain. Residues Gly19–Thr26 form a G1 region. Gly19–Thr26 lines the GTP pocket. Thr26 contributes to the Mg(2+) binding site. The G2 stretch occupies residues Gly60–Ala64. A G3 region spans residues Asp81 to Gly84. Residues Asp81 to His85 and Asn136 to Asp139 each bind GTP. Residues Asn136 to Asp139 are G4. Residues Ser174–Leu176 are G5.

It belongs to the TRAFAC class translation factor GTPase superfamily. Classic translation factor GTPase family. EF-Tu/EF-1A subfamily. In terms of assembly, monomer.

It localises to the cytoplasm. The catalysed reaction is GTP + H2O = GDP + phosphate + H(+). Its function is as follows. GTP hydrolase that promotes the GTP-dependent binding of aminoacyl-tRNA to the A-site of ribosomes during protein biosynthesis. This is Elongation factor Tu 1 from Halorhodospira halophila (strain DSM 244 / SL1) (Ectothiorhodospira halophila (strain DSM 244 / SL1)).